Consider the following 101-residue polypeptide: ATP synthase subunit c (101 aa).

Transmembrane regions (helical) follow at residues 31-51 (AFAY…GAGQ) and 81-101 (AISE…IFVG).

Belongs to the ATPase C chain family. As to quaternary structure, F-type ATPases have 2 components, F(1) - the catalytic core - and F(0) - the membrane proton channel. F(1) has five subunits: alpha(3), beta(3), gamma(1), delta(1), epsilon(1). F(0) has three main subunits: a(1), b(2) and c(10-14). The alpha and beta chains form an alternating ring which encloses part of the gamma chain. F(1) is attached to F(0) by a central stalk formed by the gamma and epsilon chains, while a peripheral stalk is formed by the delta and b chains.

Its subcellular location is the cell membrane. Functionally, f(1)F(0) ATP synthase produces ATP from ADP in the presence of a proton or sodium gradient. F-type ATPases consist of two structural domains, F(1) containing the extramembraneous catalytic core and F(0) containing the membrane proton channel, linked together by a central stalk and a peripheral stalk. During catalysis, ATP synthesis in the catalytic domain of F(1) is coupled via a rotary mechanism of the central stalk subunits to proton translocation. Its function is as follows. Key component of the F(0) channel; it plays a direct role in translocation across the membrane. A homomeric c-ring of between 10-14 subunits forms the central stalk rotor element with the F(1) delta and epsilon subunits. The polypeptide is ATP synthase subunit c (Mesomycoplasma hyopneumoniae (strain 232) (Mycoplasma hyopneumoniae)).